Here is a 631-residue protein sequence, read N- to C-terminus: Phosphomethylpyrimidine synthase (631 aa).

Substrate-binding positions include asparagine 239, methionine 268, tyrosine 297, histidine 333, 353 to 355 (SRG), 394 to 397 (DGLR), and glutamate 433. Histidine 437 provides a ligand contact to Zn(2+). Position 460 (tyrosine 460) interacts with substrate. Histidine 501 contacts Zn(2+). Residues cysteine 581, cysteine 584, and cysteine 589 each coordinate [4Fe-4S] cluster.

It belongs to the ThiC family. As to quaternary structure, homodimer. [4Fe-4S] cluster serves as cofactor.

It carries out the reaction 5-amino-1-(5-phospho-beta-D-ribosyl)imidazole + S-adenosyl-L-methionine = 4-amino-2-methyl-5-(phosphooxymethyl)pyrimidine + CO + 5'-deoxyadenosine + formate + L-methionine + 3 H(+). Its pathway is cofactor biosynthesis; thiamine diphosphate biosynthesis. Functionally, catalyzes the synthesis of the hydroxymethylpyrimidine phosphate (HMP-P) moiety of thiamine from aminoimidazole ribotide (AIR) in a radical S-adenosyl-L-methionine (SAM)-dependent reaction. This Salmonella gallinarum (strain 287/91 / NCTC 13346) protein is Phosphomethylpyrimidine synthase.